The following is a 102-amino-acid chain: uncharacterized protein (102 aa).

Positions 1–21 (MAESVNENNNNAGDSNGSGRT) are disordered. Asn16 is a glycosylation site (N-linked (GlcNAc...) asparagine). The chain crosses the membrane as a helical span at residues 24–44 (NTIVTIVVVVIVVTLIIILAT). The interval 49 to 102 (IGGSGKKVGAEEPATKLSSKSDDRNGGPNKKSPAKGSSKDDNNTEESVQSNLYG) is disordered. Residues 56–73 (VGAEEPATKLSSKSDDRN) are compositionally biased toward basic and acidic residues. N-linked (GlcNAc...) asparagine glycosylation occurs at Asn90. Residues 93 to 102 (EESVQSNLYG) show a composition bias toward polar residues.

The protein localises to the membrane. This is an uncharacterized protein from Encephalitozoon cuniculi (strain GB-M1) (Microsporidian parasite).